A 430-amino-acid chain; its full sequence is S-adenosylmethionine synthase (430 aa).

Histidine 14 lines the ATP pocket. Aspartate 16 is a Mg(2+) binding site. Glutamate 42 lines the K(+) pocket. Glutamate 55 and glutamine 98 together coordinate L-methionine. A flexible loop region spans residues 98-108; the sequence is QSADINRGVER. ATP-binding positions include 164-166, 254-255, aspartate 263, 269-270, alanine 286, and lysine 290; these read DAK, KF, and RK. Aspartate 263 contacts L-methionine. Residue lysine 294 coordinates L-methionine.

The protein belongs to the AdoMet synthase family. Homotetramer; dimer of dimers. It depends on Mg(2+) as a cofactor. The cofactor is K(+).

The protein resides in the cytoplasm. It catalyses the reaction L-methionine + ATP + H2O = S-adenosyl-L-methionine + phosphate + diphosphate. The protein operates within amino-acid biosynthesis; S-adenosyl-L-methionine biosynthesis; S-adenosyl-L-methionine from L-methionine: step 1/1. In terms of biological role, catalyzes the formation of S-adenosylmethionine (AdoMet) from methionine and ATP. The overall synthetic reaction is composed of two sequential steps, AdoMet formation and the subsequent tripolyphosphate hydrolysis which occurs prior to release of AdoMet from the enzyme. The polypeptide is S-adenosylmethionine synthase (Phocaeicola vulgatus (strain ATCC 8482 / DSM 1447 / JCM 5826 / CCUG 4940 / NBRC 14291 / NCTC 11154) (Bacteroides vulgatus)).